A 479-amino-acid polypeptide reads, in one-letter code: Spindly-like protein spdl-1 (479 aa).

Coiled-coil stretches lie at residues 4 to 180 (DEEK…EGEL), 210 to 250 (EEDL…RFNV), and 321 to 357 (LMKDNEKYVTIIRGLQQEVENLKADIVQLQFDNKCAH).

As to quaternary structure, interacts with Zwilch homolog zwl-1, a component of the RZZ complex. Interacts with mdf-1 and mdf-2.

The protein resides in the chromosome. It is found in the centromere. It localises to the kinetochore. Its subcellular location is the cytoplasm. The protein localises to the cytoskeleton. The protein resides in the spindle pole. Functionally, transient kinetochore component required for chromosome and spindle pole alignment and chromosome segregation during mitosis. Functions downstream of the RZZ complex to mediate kinetochore-microtubule attachments and nuclear envelope breakdown during cell division. Required for kinetochore assembly and localizes the checkpoint proteins mdf-1 and mdf-2, dynein and dynactin to unattached kinetochores. Dynein is believed to control the initial lateral interaction between the kinetochore and spindle microtubules and to facilitate the subsequent formation of end-on kinetochore-microtubule attachments mediated by the NDC80 complex. Required for embryonic development. The sequence is that of Spindly-like protein spdl-1 from Caenorhabditis elegans.